The following is a 504-amino-acid chain: Maturase K (504 aa).

The protein belongs to the intron maturase 2 family. MatK subfamily.

Its subcellular location is the plastid. It is found in the chloroplast. In terms of biological role, usually encoded in the trnK tRNA gene intron. Probably assists in splicing its own and other chloroplast group II introns. In Turritis glabra (Tower mustard), this protein is Maturase K.